We begin with the raw amino-acid sequence, 151 residues long: UPF0208 membrane protein YE1335 (151 aa).

2 helical membrane passes run 46–66 (FGIR…IALG) and 69–89 (LGPA…GLWW).

Belongs to the UPF0208 family.

It is found in the cell inner membrane. The sequence is that of UPF0208 membrane protein YE1335 from Yersinia enterocolitica serotype O:8 / biotype 1B (strain NCTC 13174 / 8081).